The primary structure comprises 165 residues: Large ribosomal subunit protein uL10 (165 aa).

Belongs to the universal ribosomal protein uL10 family. As to quaternary structure, part of the ribosomal stalk of the 50S ribosomal subunit. The N-terminus interacts with L11 and the large rRNA to form the base of the stalk. The C-terminus forms an elongated spine to which L12 dimers bind in a sequential fashion forming a multimeric L10(L12)X complex.

Functionally, forms part of the ribosomal stalk, playing a central role in the interaction of the ribosome with GTP-bound translation factors. This chain is Large ribosomal subunit protein uL10, found in Shewanella pealeana (strain ATCC 700345 / ANG-SQ1).